A 316-amino-acid polypeptide reads, in one-letter code: uncharacterized protein (316 aa).

The protein to yeast YGR277c.

This is an uncharacterized protein from Schizosaccharomyces pombe (strain 972 / ATCC 24843) (Fission yeast).